Here is a 450-residue protein sequence, read N- to C-terminus: tRNA modification GTPase MnmE (450 aa).

The (6S)-5-formyl-5,6,7,8-tetrahydrofolate site is built by arginine 23, glutamate 80, and arginine 123. The region spanning 219–372 (GLHVVLAGQP…LRARLLQMAG (154 aa)) is the TrmE-type G domain. Asparagine 229 contacts K(+). GTP contacts are provided by residues 229 to 234 (NVGKSS), 248 to 254 (TPIAGTT), and 273 to 276 (DTAG). Serine 233 provides a ligand contact to Mg(2+). K(+)-binding residues include threonine 248, isoleucine 250, and threonine 253. Residue threonine 254 participates in Mg(2+) binding. Lysine 450 serves as a coordination point for (6S)-5-formyl-5,6,7,8-tetrahydrofolate.

Belongs to the TRAFAC class TrmE-Era-EngA-EngB-Septin-like GTPase superfamily. TrmE GTPase family. Homodimer. Heterotetramer of two MnmE and two MnmG subunits. The cofactor is K(+).

It is found in the cytoplasm. Functionally, exhibits a very high intrinsic GTPase hydrolysis rate. Involved in the addition of a carboxymethylaminomethyl (cmnm) group at the wobble position (U34) of certain tRNAs, forming tRNA-cmnm(5)s(2)U34. The polypeptide is tRNA modification GTPase MnmE (Bordetella avium (strain 197N)).